Here is a 489-residue protein sequence, read N- to C-terminus: uncharacterized protein (489 aa).

13 helical membrane-spanning segments follow: residues 1 to 21, 40 to 60, 74 to 94, 117 to 137, 158 to 178, 188 to 208, 234 to 254, 271 to 291, 318 to 338, 362 to 382, 388 to 408, 422 to 442, and 456 to 476; these read MNAA…LGIR, FGTV…FTFL, FYII…LPAV, PLLG…YLVL, AAIW…GIHG, IMIL…YYGG, AWFS…PHTF, IIMP…FAAI, FVGI…SMIL, VSAL…YFTF, IVTL…ALLF, FAGI…ETTI, and LNVG…VSLM.

This sequence belongs to the sodium:solute symporter (SSF) (TC 2.A.21) family.

The protein localises to the cell membrane. This is an uncharacterized protein from Bacillus subtilis (strain 168).